We begin with the raw amino-acid sequence, 283 residues long: Elongation factor Ts (283 aa).

An involved in Mg(2+) ion dislocation from EF-Tu region spans residues 80–83; that stretch reads TDFV.

The protein belongs to the EF-Ts family.

Its subcellular location is the cytoplasm. Associates with the EF-Tu.GDP complex and induces the exchange of GDP to GTP. It remains bound to the aminoacyl-tRNA.EF-Tu.GTP complex up to the GTP hydrolysis stage on the ribosome. In Klebsiella pneumoniae (strain 342), this protein is Elongation factor Ts.